The chain runs to 188 residues: Vascular endothelial growth factor A-A (188 aa).

The first 23 residues, 1 to 23, serve as a signal peptide directing secretion; that stretch reads MNLVVYLIQLFLAALLHLSAVKA. Intrachain disulfides connect C49/C91, C80/C125, and C84/C127. N98 carries N-linked (GlcNAc...) asparagine glycosylation.

This sequence belongs to the PDGF/VEGF growth factor family. Homodimer; disulfide-linked. Isoform VEGF165 binds kdr and kdrl. In terms of tissue distribution, predominantly expressed in regions associated with active vascularization. From 15-16 hours post-fertilization (hpf), expressed in the anterior forebrain, the mesoderm underlying and lateral to the anterior hindbrain, the mesoderm underlying and lateral to the posterior hindbrain, and in the ventral medial portions of the somites. By 30-36 hpf, expression in the somites is decreased, while strong expression is observed in the region of the developing glomeruli and in the anterior portion of the pronephric ducts, the pharyngeal arches, and the brain. By 72 hpf, expression remains only in the pronephros region.

Its subcellular location is the secreted. Functionally, growth factor active in angiogenesis, vasculogenesis and endothelial cell growth. Induces endothelial cell proliferation, promotes cell migration, inhibits apoptosis, and induces permeabilization of blood vessels. Required for intersegmental vessel development in the tail during embryogenesis. Acts both upstream of kdr and tie1 to stimulate endothelial cell differentiation, and upstream of gata1 to stimulate hematopoietic cell differentiation. This Danio rerio (Zebrafish) protein is Vascular endothelial growth factor A-A (vegfaa).